We begin with the raw amino-acid sequence, 713 residues long: Putative ERAD-associated E3 ubiquitin-protein ligase component (713 aa).

Residues 1 to 20 (MQLLNFLICLFFIFKRCVFT) form the signal peptide. Asn48 and Asn123 each carry an N-linked (GlcNAc...) asparagine glycan. Sel1-like repeat units lie at residues 83–124 (PESQ…TQNY) and 125–160 (TYALLALAYKHLNGLSTPMSVDKGVELYKQVAHQIS). Asn211 is a glycosylation site (N-linked (GlcNAc...) asparagine). 4 Sel1-like repeats span residues 212–248 (ISAHISLATIYQYGTPGKLKDIKLAVKHYLAAIRLVN), 280–315 (SIAAFRLGCMALHGELGKPDPSLAYAWFEYGVSLNH), 490–525 (IHSLIKIGDFYRMGLGTSAKPELAFSYYSQAAAIHP), and 527–562 (ALAYWRLGWMHEYGVGVPVDFEMAKKNYDNALMHDT). Asn314 is a glycosylation site (N-linked (GlcNAc...) asparagine). Residues 621–655 (QLPPEPPTLQVDRTPQQPDPQETSESLPSPNTEEM) are disordered. The segment covering 631 to 652 (VDRTPQQPDPQETSESLPSPNT) has biased composition (polar residues). The chain crosses the membrane as a helical span at residues 671-691 (GRFLETACVTLIVVVVGLVLM).

It belongs to the sel-1 family.

The protein localises to the endoplasmic reticulum membrane. Component of the endoplasmic reticulum quality control (ERQC) system involved in ubiquitin-dependent degradation of missfolded endoplasmic reticulum proteins. This chain is Putative ERAD-associated E3 ubiquitin-protein ligase component, found in Schizosaccharomyces pombe (strain 972 / ATCC 24843) (Fission yeast).